A 209-amino-acid polypeptide reads, in one-letter code: Outer-membrane lipoprotein carrier protein (209 aa).

The N-terminal stretch at 1–23 (MKNLLKKSLLGLAFLSLNGFAFA) is a signal peptide.

This sequence belongs to the LolA family. As to quaternary structure, monomer.

Its subcellular location is the periplasm. Functionally, participates in the translocation of lipoproteins from the inner membrane to the outer membrane. Only forms a complex with a lipoprotein if the residue after the N-terminal Cys is not an aspartate (The Asp acts as a targeting signal to indicate that the lipoprotein should stay in the inner membrane). This chain is Outer-membrane lipoprotein carrier protein, found in Glaesserella parasuis serovar 5 (strain SH0165) (Haemophilus parasuis).